Consider the following 317-residue polypeptide: ADIPOR-like receptor IZH1 (317 aa).

The Lumenal segment spans residues 1–80; it reads MSEERGMKEQ…FNNESINIYT (80 aa). N73 carries N-linked (GlcNAc...) asparagine glycosylation. Residues 81-101 form a helical membrane-spanning segment; it reads HLIPGVAYLVLFLIFADLVLA. The Cytoplasmic segment spans residues 102–113; that stretch reads QLLPGLDAGEHR. The helical transmembrane segment at 114–136 threads the bilayer; it reads MLRFYLLGAFTCLACSSCFHCLK. The Lumenal portion of the chain corresponds to 137–148; sequence QHSEPHSRLWSK. A helical membrane pass occupies residues 149–169; sequence VDYLGILAQITCSTISLLYYG. The Cytoplasmic portion of the chain corresponds to 170-175; sequence YHSYPS. A helical transmembrane segment spans residues 176–196; sequence HFVFFSTLTVALCSACAVLVL. N197 carries an N-linked (GlcNAc...) asparagine glycan. The Lumenal portion of the chain corresponds to 197 to 210; that stretch reads NDSFNTVAFRPLRA. The helical transmembrane segment at 211–231 threads the bilayer; it reads FLFMAFGLSGVIPVLAGSYQF. The Cytoplasmic portion of the chain corresponds to 232 to 243; it reads GFAEWAARIQLK. A helical membrane pass occupies residues 244–264; the sequence is YVLYEAVFYITGALVYGFRIP. The Lumenal segment spans residues 265 to 283; that stretch reads ERFAPGKFDMVGHSHQIFH. The helical transmembrane segment at 284–304 threads the bilayer; that stretch reads LLVVLGTLCHFRAVTGSYIFI. Residues 305–317 are Cytoplasmic-facing; it reads CTGKHYSSLLMFI.

The protein belongs to the ADIPOR family.

It is found in the endoplasmic reticulum membrane. Its function is as follows. ADIPOR-like receptor involved in zinc metabolism either by altering membrane sterol content or by directly altering cellular zinc levels. The chain is ADIPOR-like receptor IZH1 (IZH1) from Eremothecium gossypii (strain ATCC 10895 / CBS 109.51 / FGSC 9923 / NRRL Y-1056) (Yeast).